We begin with the raw amino-acid sequence, 262 residues long: MSRHIPKKRFGQNFLQDAFIIHSIVAAVDARPGDVVVEIGPGLGALTRPLLRALPQLHVVEIDRDIIARLAAEFPPERLVIHEGDALAFDFGALAHEQPLKLVGNLPYNISTPLLFHLATYADRVTDMHFMLQKEVVDRMVADPGCADYGRLTVMLQYRFAMERLIDVPPESFDPPPKVDSAVVRMIPHAELPWPADDEENLSALVAQAFAQRRKTLRNNLRGWLDDDDFAALGIDPQRRPETLTLREFVLLSNRHGEKGRQ.

S-adenosyl-L-methionine-binding residues include N13, L15, G40, E61, D85, and N105.

The protein belongs to the class I-like SAM-binding methyltransferase superfamily. rRNA adenine N(6)-methyltransferase family. RsmA subfamily.

Its subcellular location is the cytoplasm. The enzyme catalyses adenosine(1518)/adenosine(1519) in 16S rRNA + 4 S-adenosyl-L-methionine = N(6)-dimethyladenosine(1518)/N(6)-dimethyladenosine(1519) in 16S rRNA + 4 S-adenosyl-L-homocysteine + 4 H(+). In terms of biological role, specifically dimethylates two adjacent adenosines (A1518 and A1519) in the loop of a conserved hairpin near the 3'-end of 16S rRNA in the 30S particle. May play a critical role in biogenesis of 30S subunits. This Laribacter hongkongensis (strain HLHK9) protein is Ribosomal RNA small subunit methyltransferase A.